Reading from the N-terminus, the 190-residue chain is Acireductone dioxygenase (190 aa).

4 residues coordinate Fe(2+): histidine 101, histidine 103, glutamate 107, and histidine 145. Histidine 101, histidine 103, glutamate 107, and histidine 145 together coordinate Ni(2+).

It belongs to the acireductone dioxygenase (ARD) family. Monomer. Fe(2+) is required as a cofactor. The cofactor is Ni(2+).

The catalysed reaction is 1,2-dihydroxy-5-(methylsulfanyl)pent-1-en-3-one + O2 = 3-(methylsulfanyl)propanoate + CO + formate + 2 H(+). It catalyses the reaction 1,2-dihydroxy-5-(methylsulfanyl)pent-1-en-3-one + O2 = 4-methylsulfanyl-2-oxobutanoate + formate + 2 H(+). It participates in amino-acid biosynthesis; L-methionine biosynthesis via salvage pathway; L-methionine from S-methyl-5-thio-alpha-D-ribose 1-phosphate: step 5/6. Functionally, catalyzes 2 different reactions between oxygen and the acireductone 1,2-dihydroxy-3-keto-5-methylthiopentene (DHK-MTPene) depending upon the metal bound in the active site. Fe-containing acireductone dioxygenase (Fe-ARD) produces formate and 2-keto-4-methylthiobutyrate (KMTB), the alpha-ketoacid precursor of methionine in the methionine recycle pathway. Ni-containing acireductone dioxygenase (Ni-ARD) produces methylthiopropionate, carbon monoxide and formate, and does not lie on the methionine recycle pathway. This chain is Acireductone dioxygenase, found in Saccharopolyspora erythraea (strain ATCC 11635 / DSM 40517 / JCM 4748 / NBRC 13426 / NCIMB 8594 / NRRL 2338).